Reading from the N-terminus, the 241-residue chain is U2 small nuclear ribonucleoprotein B'' (241 aa).

The RRM 1 domain maps to 12 to 91; sequence QTLYVNNLYE…RPMKIQYCKS (80 aa). Residues 99–126 are compositionally biased toward basic and acidic residues; it reads LDGTYMEKKREREENDKKGSNKKQDRKS. Residues 99 to 169 form a disordered region; that stretch reads LDGTYMEKKR…PRDDPPNKTL (71 aa). Over residues 129–152 the composition is skewed to low complexity; the sequence is QQQQQQKRPGAPTSTTSTTSPTTS. The RRM 2 domain occupies 167–241; it reads KTLFVENLPD…KPMVVSFAAQ (75 aa).

Belongs to the RRM U1 A/B'' family. Identified in the spliceosome B complex. Identified in the spliceosome C complex.

It localises to the nucleus. Functionally, involved in pre-mRNA splicing as component of the spliceosome. Associated with sn-RNP U2, where it contributes to the binding of stem loop IV of U2 snRNA. The sequence is that of U2 small nuclear ribonucleoprotein B'' (snrpb2) from Dictyostelium discoideum (Social amoeba).